Here is a 287-residue protein sequence, read N- to C-terminus: MGNQKLKWTAEEEEALLAGIRKHGPGKWKNILRDPEFADQLIHRSNIDLKDKWRNLSVPPGTQSLTNKARPAKVKEEGDTPAADANDAVTIPRPIPTIPPPPGRRTLPSELIPDENTKNAPRYDGVIFEALSALADGNGSDVSSIYHFIEPRHEVPPNFRRILSTRLRRLAAQSKLEKVSTFKSIQNFYKIPDPSGTKIGVPKPKETHTKLRQANNQTSADSQQMIEEAAITAACKVVEAENKIDVAKLAAEEFEKMTKIAEENRKLLVIATEMHELCSCGETMLLA.

The HTH myb-type domain maps to 1–62; that stretch reads MGNQKLKWTA…WRNLSVPPGT (62 aa). Residues 28–58 constitute a DNA-binding region (H-T-H motif); the sequence is WKNILRDPEFADQLIHRSNIDLKDKWRNLSV. A disordered region spans residues 58–107; it reads VPPGTQSLTNKARPAKVKEEGDTPAADANDAVTIPRPIPTIPPPPGRRTL. The segment covering 93–103 has biased composition (pro residues); it reads RPIPTIPPPPG. The 75-residue stretch at 119-193 folds into the H15 domain; it reads NAPRYDGVIF…SIQNFYKIPD (75 aa). Positions 233–259 form a coiled coil; sequence AACKVVEAENKIDVAKLAAEEFEKMTK.

It belongs to the histone H1/H5 family. SMH subfamily.

It is found in the nucleus. It localises to the chromosome. In terms of biological role, binds preferentially double-stranded telomeric repeats. This chain is Telomere repeat-binding factor 5, found in Arabidopsis thaliana (Mouse-ear cress).